We begin with the raw amino-acid sequence, 256 residues long: Type III pantothenate kinase (256 aa).

ATP is bound at residue 6–13 (DVGNTNIV). 107 to 110 (GADR) lines the substrate pocket. Asp109 (proton acceptor) is an active-site residue. Asp129 contributes to the K(+) binding site. An ATP-binding site is contributed by Thr132. Thr184 provides a ligand contact to substrate.

It belongs to the type III pantothenate kinase family. In terms of assembly, homodimer. NH4(+) serves as cofactor. The cofactor is K(+).

It is found in the cytoplasm. The catalysed reaction is (R)-pantothenate + ATP = (R)-4'-phosphopantothenate + ADP + H(+). It functions in the pathway cofactor biosynthesis; coenzyme A biosynthesis; CoA from (R)-pantothenate: step 1/5. In terms of biological role, catalyzes the phosphorylation of pantothenate (Pan), the first step in CoA biosynthesis. This chain is Type III pantothenate kinase, found in Pelotomaculum thermopropionicum (strain DSM 13744 / JCM 10971 / SI).